The primary structure comprises 202 residues: Glycerol-3-phosphate acyltransferase (202 aa).

Helical transmembrane passes span 2-22, 54-74, 85-105, 120-140, 141-161, and 162-182; these read MIIVMLLLSYLIGAFPSGFVI, FLVTFLDIFKGFITVFFPLWL, FFTNGLIVGLFAILGHVYPVY, VVLGVNPILLLILAIIFFIVL, KIFKYVSLASIVAAICCVIGS, and LIIQDYILLVVSFLVSIILII.

The protein belongs to the PlsY family. As to quaternary structure, probably interacts with PlsX.

The protein localises to the cell membrane. It carries out the reaction an acyl phosphate + sn-glycerol 3-phosphate = a 1-acyl-sn-glycero-3-phosphate + phosphate. It functions in the pathway lipid metabolism; phospholipid metabolism. Functionally, catalyzes the transfer of an acyl group from acyl-phosphate (acyl-PO(4)) to glycerol-3-phosphate (G3P) to form lysophosphatidic acid (LPA). This enzyme utilizes acyl-phosphate as fatty acyl donor, but not acyl-CoA or acyl-ACP. This chain is Glycerol-3-phosphate acyltransferase, found in Staphylococcus aureus (strain Mu3 / ATCC 700698).